We begin with the raw amino-acid sequence, 596 residues long: Dihydroxy-acid dehydratase pbrD, mitochondrial (596 aa).

A mitochondrion-targeting transit peptide spans 1-18; sequence MATSSIRSRALGLSRRAR. Residue Cys-84 coordinates [2Fe-2S] cluster. Asp-116 is a binding site for Mg(2+). Position 157 (Cys-157) interacts with [2Fe-2S] cluster. Asp-158 provides a ligand contact to Mg(2+). A [2Fe-2S] cluster-binding site is contributed by Cys-230. Glu-483 is a binding site for Mg(2+). Catalysis depends on Ser-509, which acts as the Proton acceptor.

The protein belongs to the IlvD/Edd family. It depends on [2Fe-2S] cluster as a cofactor. Mg(2+) serves as cofactor.

The protein localises to the mitochondrion. The catalysed reaction is (2R)-2,3-dihydroxy-3-methylbutanoate = 3-methyl-2-oxobutanoate + H2O. It carries out the reaction (2R,3R)-2,3-dihydroxy-3-methylpentanoate = (S)-3-methyl-2-oxopentanoate + H2O. The protein operates within amino-acid biosynthesis; L-isoleucine biosynthesis; L-isoleucine from 2-oxobutanoate: step 3/4. Its pathway is amino-acid biosynthesis; L-valine biosynthesis; L-valine from pyruvate: step 3/4. With respect to regulation, DHAD activity is not inhibited by the dihydroxyacid dehydratase inhibitor aspterric acid (AA). Functionally, dihydroxyacid dehydratase; part of the gene cluster that mediates the biosynthesis of the sesquiterpenoid aspterric acid (AA), an inhibitor of dihydroxy-acid dehydratase (DHAD) effective as an herbicide. Performs the third step in the common pathway leading to biosynthesis of branched-chain amino acids. Catalyzes the dehydration of (2R,3R)-2,3-dihydroxy-3-methylpentanoate (2,3-dihydroxy-3-methylvalerate) into 2-oxo-3-methylpentanoate (2-oxo-3-methylvalerate) and of (2R)-2,3-dihydroxy-3-methylbutanoate (2,3-dihydroxyisovalerate) into 2-oxo-3-methylbutanoate (2-oxoisovalerate), the penultimate precursor to L-isoleucine and L-valine, respectively. PbrD confers self-resistance in the presence of the dihydroxyacid dehydratase inhibitor aspterric acid (AA) produced by the ast cluster. This chain is Dihydroxy-acid dehydratase pbrD, mitochondrial, found in Penicillium brasilianum.